A 901-amino-acid polypeptide reads, in one-letter code: Protein translocase subunit SecA (901 aa).

Residues Q87, 105–109, and D512 contribute to the ATP site; that span reads GEGKT. The interval 868–901 is disordered; the sequence is AALAAQTGERKVGRNDPCPCGSGKKYKQCHGRLQ. 4 residues coordinate Zn(2+): C885, C887, C896, and H897. Basic residues predominate over residues 891–901; that stretch reads KKYKQCHGRLQ.

Belongs to the SecA family. Monomer and homodimer. Part of the essential Sec protein translocation apparatus which comprises SecA, SecYEG and auxiliary proteins SecDF-YajC and YidC. Zn(2+) serves as cofactor.

It is found in the cell inner membrane. The protein localises to the cytoplasm. The enzyme catalyses ATP + H2O + cellular proteinSide 1 = ADP + phosphate + cellular proteinSide 2.. Its function is as follows. Part of the Sec protein translocase complex. Interacts with the SecYEG preprotein conducting channel. Has a central role in coupling the hydrolysis of ATP to the transfer of proteins into and across the cell membrane, serving both as a receptor for the preprotein-SecB complex and as an ATP-driven molecular motor driving the stepwise translocation of polypeptide chains across the membrane. The polypeptide is Protein translocase subunit SecA (Escherichia coli O45:K1 (strain S88 / ExPEC)).